The following is a 78-amino-acid chain: Large ribosomal subunit protein bL28 (78 aa).

Residues 1–31 (MAAHCQVTGAEPGFGHSISHSHRRNKRRFDP) form a disordered region.

This sequence belongs to the bacterial ribosomal protein bL28 family.

In Paenarthrobacter aurescens (strain TC1), this protein is Large ribosomal subunit protein bL28.